Here is a 155-residue protein sequence, read N- to C-terminus: Endoribonuclease YbeY (155 aa).

Residues His120, His124, and His130 each coordinate Zn(2+).

This sequence belongs to the endoribonuclease YbeY family. Requires Zn(2+) as cofactor.

Its subcellular location is the cytoplasm. Functionally, single strand-specific metallo-endoribonuclease involved in late-stage 70S ribosome quality control and in maturation of the 3' terminus of the 16S rRNA. This Borreliella burgdorferi (strain ATCC 35210 / DSM 4680 / CIP 102532 / B31) (Borrelia burgdorferi) protein is Endoribonuclease YbeY.